We begin with the raw amino-acid sequence, 105 residues long: uncharacterized protein (105 aa).

The disordered stretch occupies residues 1-27 (MQSPAMKRIKSSSHSRWDGSGSVNEMP).

It localises to the mitochondrion. This is an uncharacterized protein from Arabidopsis thaliana (Mouse-ear cress).